The sequence spans 103 residues: Large ribosomal subunit protein bL21 (103 aa).

It belongs to the bacterial ribosomal protein bL21 family. Part of the 50S ribosomal subunit. Contacts protein L20.

This protein binds to 23S rRNA in the presence of protein L20. The polypeptide is Large ribosomal subunit protein bL21 (Nocardia farcinica (strain IFM 10152)).